The following is a 368-amino-acid chain: Peptide chain release factor 2 (368 aa).

N5-methylglutamine is present on Gln245.

It belongs to the prokaryotic/mitochondrial release factor family. Methylated by PrmC. Methylation increases the termination efficiency of RF2.

It is found in the cytoplasm. Functionally, peptide chain release factor 2 directs the termination of translation in response to the peptide chain termination codons UGA and UAA. This is Peptide chain release factor 2 (prfB) from Treponema pallidum (strain Nichols).